We begin with the raw amino-acid sequence, 64 residues long: Large ribosomal subunit protein bL35 (64 aa).

It belongs to the bacterial ribosomal protein bL35 family.

The sequence is that of Large ribosomal subunit protein bL35 from Alcanivorax borkumensis (strain ATCC 700651 / DSM 11573 / NCIMB 13689 / SK2).